The chain runs to 199 residues: Photosystem II D1 precursor processing protein PSB27-H2, chloroplastic (199 aa).

Belongs to the Psb27 family. In terms of assembly, interacts with the C-terminus of both the precursor and mature form of D1.

It is found in the plastid. Its subcellular location is the chloroplast thylakoid lumen. In terms of biological role, required, but not essential, for D1 (psbA) precursor processing and thus correct photosystem II assembly (PSII). The polypeptide is Photosystem II D1 precursor processing protein PSB27-H2, chloroplastic (PSB27-2) (Arabidopsis thaliana (Mouse-ear cress)).